Here is a 321-residue protein sequence, read N- to C-terminus: Beta-porphyranase B (321 aa).

The signal sequence occupies residues 1 to 20; sequence MRKTVLYLSAASLFLSSYTL. In terms of domain architecture, GH16 spans 31 to 319; the sequence is EHIKNLPEAP…WVRAYKLVPI (289 aa). Residues tryptophan 72, arginine 76, glutamate 173, glutamate 178, and glutamate 284 each coordinate substrate. Glutamate 173 serves as the catalytic Nucleophile. Glutamate 178 acts as the Proton donor in catalysis.

The protein belongs to the glycosyl hydrolase 16 family.

The catalysed reaction is Hydrolysis of beta-D-galactopyranose-(1-&gt;4)-alpha-L-galactopyranose-6-sulfate linkages in porphyran.. In terms of biological role, cleaves the sulfated polysaccharide porphyran at the (1-&gt;4) linkages between beta-D-galactopyranose and alpha-L-galactopyranose-6-sulfate, forming mostly the disaccharide alpha-L-galactopyranose-6-sulfate-(1-&gt;3)-beta-D-galactose. Some longer oligosaccharides of even number of residues are also observed. Inactive on the non-sulfated agarose portion of the porphyran backbone. The polypeptide is Beta-porphyranase B (Phocaeicola plebeius (strain DSM 17135 / JCM 12973 / CCUG 54634 / M2) (Bacteroides plebeius)).